The following is a 279-amino-acid chain: tRNA-cytidine(32) 2-sulfurtransferase (279 aa).

The PP-loop motif motif lies at 46–51 (SGGKDS). Cys-121, Cys-124, and Cys-212 together coordinate [4Fe-4S] cluster.

The protein belongs to the TtcA family. In terms of assembly, homodimer. It depends on Mg(2+) as a cofactor. Requires [4Fe-4S] cluster as cofactor.

It localises to the cytoplasm. The catalysed reaction is cytidine(32) in tRNA + S-sulfanyl-L-cysteinyl-[cysteine desulfurase] + AH2 + ATP = 2-thiocytidine(32) in tRNA + L-cysteinyl-[cysteine desulfurase] + A + AMP + diphosphate + H(+). It participates in tRNA modification. Functionally, catalyzes the ATP-dependent 2-thiolation of cytidine in position 32 of tRNA, to form 2-thiocytidine (s(2)C32). The sulfur atoms are provided by the cysteine/cysteine desulfurase (IscS) system. This is tRNA-cytidine(32) 2-sulfurtransferase from Marinomonas sp. (strain MWYL1).